We begin with the raw amino-acid sequence, 279 residues long: Four and a half LIM domains protein 2 (279 aa).

A C4-type zinc finger spans residues 7-31; the sequence is CHHCNESLYGKKYILKEENPHCVAC. LIM zinc-binding domains are found at residues 40–92, 101–153, and 162–212; these read CEEC…CTDC, CQEC…CVPC, and CVQC…CLTC. K78 is covalently cross-linked (Glycyl lysine isopeptide (Lys-Gly) (interchain with G-Cter in SUMO2)). Glycyl lysine isopeptide (Lys-Gly) (interchain with G-Cter in SUMO2) cross-links involve residues K167 and K220. Positions 221–275 constitute an LIM zinc-binding 4 domain; it reads CAGCTNPISGLGGTKYISFEERQWHNDCFNCKKCSLSLVGRGFLTERDDILCPDC. S238 is modified (phosphoserine).

Interacts with ZNF638 and TTN/titin. Interacts with E4F1. Interacts with GRB7. Interacts with SIRT1 and FOXO1. Interacts with CEFIP and calcineurin. Interacts with FOXK1. As to expression, expressed in heart only (at protein level).

The protein localises to the cytoplasm. The protein resides in the nucleus. It is found in the myofibril. It localises to the sarcomere. Its subcellular location is the z line. Its function is as follows. May function as a molecular transmitter linking various signaling pathways to transcriptional regulation. Negatively regulates the transcriptional repressor E4F1 and may function in cell growth. Inhibits the transcriptional activity of FOXO1 and its apoptotic function by enhancing the interaction of FOXO1 with SIRT1 and FOXO1 deacetylation. Negatively regulates the calcineurin/NFAT signaling pathway in cardiomyocytes. The protein is Four and a half LIM domains protein 2 (Fhl2) of Rattus norvegicus (Rat).